Here is a 202-residue protein sequence, read N- to C-terminus: Transcription factor IBH1 (202 aa).

A compositionally biased stretch (pro residues) spans M1–N16. The segment at M1–R33 is disordered. The bHLH domain maps to T136–L185.

Belongs to the bHLH protein family. In terms of assembly, interacts with ILI1.

Functionally, atypical and probable non DNA-binding bHLH transcription factor that acts as a negative regulator of cell elongation and plant development. Binds the transcription factor ILI1 and forms a heterodimer of antagonistic bHLH transcription factors that function downstream of BZR1 to mediate brassinosteroid regulation of cell elongation and lamina inclination. This is Transcription factor IBH1 (IBH1) from Oryza sativa subsp. indica (Rice).